The sequence spans 192 residues: Flagellar transcriptional regulator FlhC (192 aa).

Residues Cys-137, Cys-140, Cys-157, and Cys-160 each coordinate Zn(2+).

This sequence belongs to the FlhC family. Heterohexamer composed of two FlhC and four FlhD subunits. Each FlhC binds a FlhD dimer, forming a heterotrimer, and a hexamer assembles by dimerization of two heterotrimers. The cofactor is Zn(2+).

The protein resides in the cytoplasm. Functions in complex with FlhD as a master transcriptional regulator that regulates transcription of several flagellar and non-flagellar operons by binding to their promoter region. Activates expression of class 2 flagellar genes, including fliA, which is a flagellum-specific sigma factor that turns on the class 3 genes. Also regulates genes whose products function in a variety of physiological pathways. The protein is Flagellar transcriptional regulator FlhC of Escherichia coli O6:H1 (strain CFT073 / ATCC 700928 / UPEC).